A 192-amino-acid chain; its full sequence is ER membrane protein complex subunit 8/9 homolog (192 aa).

Residues isoleucine 5–aspartate 135 form the MPN domain.

The protein belongs to the EMC8/EMC9 family.

In Dictyostelium discoideum (Social amoeba), this protein is ER membrane protein complex subunit 8/9 homolog.